A 147-amino-acid chain; its full sequence is Large ribosomal subunit protein uL15 (147 aa).

The tract at residues 1–58 (MKLHELKPAQGSTKAPKRLGRGIGSGTGKTSGKGHKGQKARAGGGVRPGFEGGQQPLA) is disordered. 2 stretches are compositionally biased toward gly residues: residues 21 to 31 (RGIGSGTGKTS) and 42 to 52 (AGGGVRPGFEG).

The protein belongs to the universal ribosomal protein uL15 family. In terms of assembly, part of the 50S ribosomal subunit.

Functionally, binds to the 23S rRNA. In Desulfitobacterium hafniense (strain Y51), this protein is Large ribosomal subunit protein uL15.